A 331-amino-acid chain; its full sequence is dTDP-glucose 4,6-dehydratase (331 aa).

NAD(+)-binding positions include 11-12, 33-36, 57-58, 77-81, and Ser-96; these read FI, DALT, DI, and FAAET. Substrate is bound at residue Thr-81. Position 120 (Thr-120) interacts with substrate. Catalysis depends on Asp-121, which acts as the Proton donor. Catalysis depends on proton acceptor residues Glu-122 and Tyr-147. 147–151 lines the NAD(+) pocket; sequence YSSTK. Residue Asn-176 coordinates substrate. Asn-177 is an NAD(+) binding site. Substrate is bound by residues 186–191, 202–204, Arg-211, Asn-246, and 269–273; these read KFIPRQ, KLY, and DRAGH.

It belongs to the NAD(P)-dependent epimerase/dehydratase family. dTDP-glucose dehydratase subfamily. As to quaternary structure, homodimer. NAD(+) is required as a cofactor.

The catalysed reaction is dTDP-alpha-D-glucose = dTDP-4-dehydro-6-deoxy-alpha-D-glucose + H2O. The protein operates within carbohydrate biosynthesis; dTDP-L-rhamnose biosynthesis. Functionally, catalyzes the dehydration of dTDP-D-glucose to form dTDP-6-deoxy-D-xylo-4-hexulose via a three-step process involving oxidation, dehydration and reduction. Involved in the biosynthesis of the dTDP-L-rhamnose which is a component of the critical linker, D-N-acetylglucosamine-L-rhamnose disaccharide, which connects the galactan region of arabinogalactan to peptidoglycan via a phosphodiester linkage. This chain is dTDP-glucose 4,6-dehydratase (rmlB), found in Mycolicibacterium smegmatis (strain ATCC 700084 / mc(2)155) (Mycobacterium smegmatis).